The primary structure comprises 181 residues: UPF0200 protein Ta0179 (181 aa).

Residue 6–13 coordinates ATP; the sequence is GMPGAGKD.

The protein belongs to the UPF0200 family.

This chain is UPF0200 protein Ta0179, found in Thermoplasma acidophilum (strain ATCC 25905 / DSM 1728 / JCM 9062 / NBRC 15155 / AMRC-C165).